The following is a 765-amino-acid chain: MHSISALLSLLGGLALSSAAPTQNITSDAYFYGQSPAVYPSPEGTGTGSWASAYEKAKAFVAQLTDDEKVNLTAGVSSKTGCSGFIAEIPRLNFTGLCVSDASNGLRGTDYVNGWSSGIHVGASWNRTLARDRAKYMGQEFHRKGVNLLLGPVVGPLGRVAEGGRNWEGFSNDPYLTGALVYETVQGVQSSGVGVSTKHYIGNEQETNRNPETVNGVDVASVSSNIDDKTIHELYLWPFQDAVLAGSVAIMCSYERINNSYACQNSKTLNGLLKTELGFQGYVITDWGAQHGGIASANAGLDMVMPETTLWGSNLTTAIANGTMEASRLDDMATRIIATWYQLNQDTDFPTPGVGMPASAQSEHQVVVGTAPDEKSTLLESAIEGHVLVKNTNNALPLQTPQLVSVFGYDAKVTDSFDLASTVLGTSPLFQNYTLWVGGGSGSNSPAYVIAPLNAIQQQAYEDGTSVLWDVSAQDPEVDPTSEACLVFINSFATEGYDRSALTDDYSDTLVTNVASKCNNTIVVVHNAGIRLVYNWIDHENVTAVVLAHLPGQDTGHALVDILYGRANPSGKLPYTIAKQASDYGSLLHPSEPQTPYGLFPQSDFSEGVYIDYRAFDKDNITPQFEFGFGLSYTTFAYSGLSIEKTNETTSEYPPSAAIQEGGNPRLWDDLVTVTAEVQNSGSVDGAEVAQLYVGIPNGPVRQLRGFDKVLLSAGETAQVSFSLNRRDLSTWNVEAQQWQLQSGTYQVYVGRSSRDLPLTGEFSI.

The signal sequence occupies residues 1 to 19; that stretch reads MHSISALLSLLGGLALSSA. N-linked (GlcNAc...) asparagine glycosylation is found at Asn24, Asn71, Asn93, Asn126, and Asn258. The active site involves Asp286. N-linked (GlcNAc...) asparagine glycosylation is found at Asn314, Asn321, Asn432, Asn519, Asn541, and Asn647.

It belongs to the glycosyl hydrolase 3 family.

It is found in the secreted. The enzyme catalyses Hydrolysis of terminal, non-reducing beta-D-glucosyl residues with release of beta-D-glucose.. Its pathway is glycan metabolism; cellulose degradation. In terms of biological role, beta-glucosidases are one of a number of cellulolytic enzymes involved in the degradation of cellulosic biomass. Catalyzes the last step releasing glucose from the inhibitory cellobiose. This chain is Probable beta-glucosidase M (bglM), found in Aspergillus niger (strain ATCC MYA-4892 / CBS 513.88 / FGSC A1513).